Reading from the N-terminus, the 80-residue chain is MKADIHPTYAETTVLCGCGNTFQTRSTKDGGRIVVEVCSQCHPFYTGKQKILDSGGRVARFEKRYGKRKAGAEKAESADK.

4 residues coordinate Zn(2+): cysteine 16, cysteine 18, cysteine 38, and cysteine 41.

It belongs to the bacterial ribosomal protein bL31 family. Type A subfamily. As to quaternary structure, part of the 50S ribosomal subunit. It depends on Zn(2+) as a cofactor.

Functionally, binds the 23S rRNA. The polypeptide is Large ribosomal subunit protein bL31 (Mycobacterium avium (strain 104)).